Consider the following 579-residue polypeptide: Carboxysome shell carbonic anhydrase (579 aa).

Residues 72-95 (GGGRVRSARDQRQPGWVRRDKGAT) form a disordered region. The segment covering 78-93 (SARDQRQPGWVRRDKG) has biased composition (basic and acidic residues). Residue Cys240 coordinates Zn(2+). Residue Asp242 is the Proton acceptor of the active site. Residues His308 and Cys319 each contribute to the Zn(2+) site.

Belongs to the beta-class carbonic anhydrase family. CsoSCA subfamily. As to quaternary structure, homodimer. Requires Zn(2+) as cofactor.

It localises to the carboxysome. The enzyme catalyses hydrogencarbonate + H(+) = CO2 + H2O. With respect to regulation, inhibited by dithiothreitol, partially inhibited by acetatzolamide and cyanide. Reversible hydration of carbon dioxide. Essential for photosynthetic carbon dioxide fixation, supplies CO(2) to RuBisCO (ribulose bisphosphate carboxylase, cbbL-cbbS) in the carboxysome. This is Carboxysome shell carbonic anhydrase from Parasynechococcus marenigrum (strain WH8102).